The primary structure comprises 371 residues: Proton-coupled zinc antiporter SLC30A2 (371 aa).

The Cytoplasmic portion of the chain corresponds to 1-69 (MQTMDKQNLL…DPEKQRARRK (69 aa)). Residues 47 to 50 (HYCH) carry the Mitochondrial localization signal motif. Residue Cys49 coordinates Zn(2+). A helical transmembrane segment spans residues 70 to 90 (LYVASAICLVFMIGEIIGGYL). At 91–99 (AQSLAIMTD) the chain is on the lumenal side. Residues 100–120 (AAHLLTDFASMLISLFALWVS) form a helical membrane-spanning segment. Zn(2+) contacts are provided by His102 and Asp106. Residues 121-136 (SRPATKTMNFGWHRAE) are Cytoplasmic-facing. The chain crosses the membrane as a helical span at residues 137–157 (ILGALLSVLSIWVVTGVLVYL). The Lumenal segment spans residues 158 to 172 (AVQRLISGDYEIKGD). The chain crosses the membrane as a helical span at residues 173–193 (TMLITSGCAVAVNLIMGLALH). Residues 194–219 (QSGHGHSHGNSRDDSSQQQNPSVRAA) lie on the Cytoplasmic side of the membrane. Residues 220 to 240 (FIHVIGDLLQSVGVLVAAYII) form a helical membrane-spanning segment. The Zn(2+) site is built by His222 and Asp226. The Lumenal portion of the chain corresponds to 241-248 (YFKPEYKY). A helical transmembrane segment spans residues 249–269 (VDPICTFLFSILVLGTTLTIL). Residues 270 to 303 (RDVILVLMEGTPKGVDFTTVKNLLLSVDGVEALH) lie on the Cytoplasmic side of the membrane. The Lysosomal targeting motif motif lies at 293–294 (LL). Ser295 bears the Phosphoserine mark. 3 residues coordinate Zn(2+): His303, His320, and Glu354. A helical transmembrane segment spans residues 304-324 (SLHIWALTVAQPVLSVHIAIA). At 325 to 371 (QNADAQAVLKVARDRLQGKFNFHTMTIQIEKYSEDMKNCQACQGPLE) the chain is on the lumenal side.

The protein belongs to the cation diffusion facilitator (CDF) transporter (TC 2.A.4) family. SLC30A subfamily. Homodimer. Interacts (via lysosomal targeting motif) with AP3D1; in AP-3-mediated transport to lysosomes. Interacts with TMEM163. Post-translationally, phosphorylated at Ser-295. Phosphorylation at Ser-295 prevents localization to lysosomes. Dephosphorylation of Ser-295 which triggers localization to lysosomes, accumulation of zinc into lysosomes and lysosomal-mediated cell death is induced by TNF-alpha.

The protein localises to the cytoplasmic vesicle. It localises to the secretory vesicle membrane. It is found in the zymogen granule membrane. Its subcellular location is the endosome membrane. The protein resides in the lysosome membrane. The protein localises to the mitochondrion inner membrane. It localises to the cell membrane. The enzyme catalyses Zn(2+)(in) + 2 H(+)(out) = Zn(2+)(out) + 2 H(+)(in). Functionally, electroneutral proton-coupled antiporter concentrating zinc ions into a variety of intracellular organelles including endosomes, zymogen granules and mitochondria. Thereby, plays a crucial role in cellular zinc homeostasis to confer upon cells protection against its potential cytotoxicity. Regulates the zinc concentration of milk, through the transport of zinc ions into secretory vesicles of mammary cells. By concentrating zinc ions into lysosomes participates to lysosomal-mediated cell death during early mammary gland involution. Electroneutral proton-coupled antiporter mediating the efflux of zinc ions through the plasma membrane. The protein is Proton-coupled zinc antiporter SLC30A2 of Mus musculus (Mouse).